Reading from the N-terminus, the 517-residue chain is Ribonuclease Y (517 aa).

A helical transmembrane segment spans residues Met-1–Val-21. The KH domain maps to Leu-207–Asp-273. One can recognise an HD domain in the interval Ala-333 to Ala-426.

It belongs to the RNase Y family.

The protein localises to the cell membrane. Endoribonuclease that initiates mRNA decay. The sequence is that of Ribonuclease Y from Campylobacter fetus subsp. fetus (strain 82-40).